A 491-amino-acid polypeptide reads, in one-letter code: Cytochrome P450 2F2 (491 aa).

Position 436 (Cys-436) interacts with heme.

Belongs to the cytochrome P450 family. Requires heme as cofactor.

Its subcellular location is the endoplasmic reticulum membrane. It is found in the microsome membrane. In terms of biological role, involved in the regio- and stereoselective transformation of naphthalene to trans-1R-hydroxy-2R-glutathionyl-1,2-dihydronaphthalene in the presence of glutathione and glutathione S-transferases. It specifically catalyzes the production of a very reactive and potentially toxic intermediate, the 2R,2S arene oxide, that is associated with necrosis of the unciliated bronchiolar epithelial cells or club cells in lung. This chain is Cytochrome P450 2F2 (Cyp2f2), found in Rattus norvegicus (Rat).